The sequence spans 831 residues: von Willebrand factor A domain-containing protein DDB_G0285981 (831 aa).

The 129-residue stretch at 60–188 (RDTFGLKTFS…NVTIHLTIIS (129 aa)) folds into the VIT domain. The VWFA domain maps to 312–480 (EFIFLIDCSG…NFEEQVMKLV (169 aa)).

The chain is von Willebrand factor A domain-containing protein DDB_G0285981 from Dictyostelium discoideum (Social amoeba).